The chain runs to 172 residues: Ribosome maturation factor RimM (172 aa).

Positions 96-168 constitute a PRC barrel domain; it reads DGEFYYHEII…RIEVELMEGL (73 aa).

The protein belongs to the RimM family. As to quaternary structure, binds ribosomal protein uS19.

It localises to the cytoplasm. Its function is as follows. An accessory protein needed during the final step in the assembly of 30S ribosomal subunit, possibly for assembly of the head region. Essential for efficient processing of 16S rRNA. May be needed both before and after RbfA during the maturation of 16S rRNA. It has affinity for free ribosomal 30S subunits but not for 70S ribosomes. This is Ribosome maturation factor RimM from Streptococcus thermophilus (strain CNRZ 1066).